The sequence spans 310 residues: N-acetyl-gamma-glutamyl-phosphate reductase (310 aa).

Cys-117 is an active-site residue.

It belongs to the NAGSA dehydrogenase family. Type 2 subfamily.

The protein localises to the cytoplasm. It catalyses the reaction N-acetyl-L-glutamate 5-semialdehyde + phosphate + NADP(+) = N-acetyl-L-glutamyl 5-phosphate + NADPH + H(+). It participates in amino-acid biosynthesis; L-arginine biosynthesis; N(2)-acetyl-L-ornithine from L-glutamate: step 3/4. Its function is as follows. Catalyzes the NADPH-dependent reduction of N-acetyl-5-glutamyl phosphate to yield N-acetyl-L-glutamate 5-semialdehyde. This chain is N-acetyl-gamma-glutamyl-phosphate reductase, found in Rhizobium meliloti (strain 1021) (Ensifer meliloti).